The primary structure comprises 606 residues: WD repeat-containing protein 1 (606 aa).

13 WD repeats span residues 4–45 (EIKK…LRNI), 48–87 (PAIA…IWDT), 93–135 (LLKY…LWDT), 138–176 (SVGE…FFEG), 180–218 (KFKF…IYDG), 224–263 (VCAL…IWDV), 270–306 (STFP…YLDK), 311–351 (KPLR…YWDS), 358–408 (SFSG…KLDV), 432–474 (LKDQ…VYSI), 480–518 (KDEG…VFSV), 523–561 (SENN…VWTL), and 566–604 (TKVK…EWTI). Residues Lys-28, Lys-81, Lys-95, and Lys-115 each carry the N6-acetyllysine modification. The residue at position 238 (Tyr-238) is a Phosphotyrosine. Residue Lys-480 is modified to N6-acetyllysine.

The protein belongs to the WD repeat AIP1 family.

Its subcellular location is the cytoplasm. It is found in the cytoskeleton. The protein localises to the cell projection. The protein resides in the podosome. Induces disassembly of actin filaments in conjunction with ADF/cofilin family proteins. Enhances cofilin-mediated actin severing. Involved in cytokinesis. Involved in chemotactic cell migration by restricting lamellipodial membrane protrusions. Involved in myocardium sarcomere organization. Required for cardiomyocyte growth at the postnatal and maintenance at the adult stage. Involved in neutrophil actin dynamics and migration. Involved in megakaryocyte maturation and platelet shedding. Required for the establishment of planar cell polarity (PCP) during follicular epithelium development and for cell shape changes during PCP; the function seems to implicate cooperation with CFL1 and/or DSTN/ADF. Involved in the generation/maintenance of cortical tension. Involved in assembly and maintenance of epithelial apical cell junctions and plays a role in the organization of the perijunctional actomyosin belt. The chain is WD repeat-containing protein 1 (Wdr1) from Mus musculus (Mouse).